A 677-amino-acid chain; its full sequence is Multicopper oxidase GIP1 (677 aa).

The first 23 residues, 1-23 (MLTSPRLILLLLAWVFSALVASA), serve as a signal peptide directing secretion. Plastocyanin-like domains are found at residues 31–150 (ITWE…IRRK) and 179–379 (LVMV…RYKG). Asparagine 76 is a glycosylation site (N-linked (GlcNAc...) asparagine). Cu cation is bound by residues histidine 80, histidine 82, histidine 130, and histidine 132. N-linked (GlcNAc...) asparagine glycans are attached at residues asparagine 228, asparagine 283, asparagine 396, and asparagine 478. The region spanning 469-588 (DEGLVIRTKN…AGGMAIAILD (120 aa)) is the Plastocyanin-like 3 domain. A Cu cation-binding site is contributed by histidine 503. Residue asparagine 520 is glycosylated (N-linked (GlcNAc...) asparagine). A disordered region spans residues 629 to 651 (PLLAVSPSGGPKKDSGETSASDS).

It belongs to the multicopper oxidase family. In terms of assembly, might be part of an extracellular enzyme complex composed of GIP1, aurF, aurO and aurS.

Its subcellular location is the secreted. It localises to the extracellular space. The protein operates within pigment biosynthesis. Its function is as follows. Multicopper oxidase; part of the gene cluster that mediates the biosynthesis of aurofusarin, a red mycelium pigment which is acting as a mycotoxin. The first step is performed by the polyketide synthase which condenses one acetyl-CoA and 6 malonyl-CoA units to form the first intermediate, the cyclic heptaketide and yellow pigment YWA1. The C2 hydroxyl group in the pyrone ring of YWA1 is probably formed during ring closure by an aldol-type cyclization reaction. The dehydratase aurZ then acts as the first tailoring enzyme in the aurofusarin biosynthetic pathway by converting YWA1 to nor-rubrofusarin. Nor-rubrofusarin is then methylated to rubrofusarin by the O-methyltransferase aurJ. Rubrofusarin is then transported across the plasma membrane by the rubrofusarin-specific pump aurT for further enzymatic processing by the extracellular complex composed of GIP1, aurF, aurO and aurS to yield aurofusarin. In Gibberella zeae (strain ATCC MYA-4620 / CBS 123657 / FGSC 9075 / NRRL 31084 / PH-1) (Wheat head blight fungus), this protein is Multicopper oxidase GIP1.